The following is a 151-amino-acid chain: Large ribosomal subunit protein uL13 (151 aa).

The protein belongs to the universal ribosomal protein uL13 family. In terms of assembly, part of the 50S ribosomal subunit.

Functionally, this protein is one of the early assembly proteins of the 50S ribosomal subunit, although it is not seen to bind rRNA by itself. It is important during the early stages of 50S assembly. This Picosynechococcus sp. (strain ATCC 27264 / PCC 7002 / PR-6) (Agmenellum quadruplicatum) protein is Large ribosomal subunit protein uL13.